Consider the following 349-residue polypeptide: Dihydroorotate dehydrogenase (quinone) (349 aa).

Residues 65–69 and alanine 89 each bind FMN; that span reads AGFDK. Residue lysine 69 participates in substrate binding. 114 to 118 contacts substrate; the sequence is NRMGF. 2 residues coordinate FMN: asparagine 143 and asparagine 176. Residue asparagine 176 coordinates substrate. Serine 179 functions as the Nucleophile in the catalytic mechanism. Residue asparagine 181 participates in substrate binding. Lysine 212 and threonine 240 together coordinate FMN. 241–242 provides a ligand contact to substrate; that stretch reads NT. A disordered region spans residues 244-265; that stretch reads TERPESLSHPHAGEQGGLSGAP. Residues 245–255 show a composition bias toward basic and acidic residues; that stretch reads ERPESLSHPHA. FMN contacts are provided by residues glycine 263, glycine 290, and 311–312; that span reads YT.

The protein belongs to the dihydroorotate dehydrogenase family. Type 2 subfamily. As to quaternary structure, monomer. It depends on FMN as a cofactor.

It localises to the cell membrane. It carries out the reaction (S)-dihydroorotate + a quinone = orotate + a quinol. The protein operates within pyrimidine metabolism; UMP biosynthesis via de novo pathway; orotate from (S)-dihydroorotate (quinone route): step 1/1. Its function is as follows. Catalyzes the conversion of dihydroorotate to orotate with quinone as electron acceptor. This Halobacterium salinarum (strain ATCC 29341 / DSM 671 / R1) protein is Dihydroorotate dehydrogenase (quinone).